We begin with the raw amino-acid sequence, 71 residues long: Metallothionein-like protein 1 (71 aa).

The protein belongs to the metallothionein superfamily. Type 15 family.

Functionally, metallothioneins have a high content of cysteine residues that bind various heavy metals. In Casuarina glauca (Swamp oak), this protein is Metallothionein-like protein 1 (MT1).